Consider the following 217-residue polypeptide: Adenylate kinase (217 aa).

Residue 10–15 (GAGKGT) participates in ATP binding. Positions 30–59 (STGDMFRAAIKEGTELGLQAKSFMDQGALV) are NMP. AMP-binding positions include Thr-31, Arg-36, 57–59 (ALV), 85–88 (GFPR), and Gln-92. The interval 126 to 163 (GRRICKTCGASYHLIFNPPAEEGKCDKDGGELYTRADD) is LID. Position 127 (Arg-127) interacts with ATP. Zn(2+)-binding residues include Cys-130 and Cys-133. Residue 136–137 (SY) coordinates ATP. Residues Cys-150 and Asp-153 each contribute to the Zn(2+) site. AMP contacts are provided by Arg-160 and Arg-171. Gln-199 provides a ligand contact to ATP.

It belongs to the adenylate kinase family. Monomer.

The protein resides in the cytoplasm. The enzyme catalyses AMP + ATP = 2 ADP. It participates in purine metabolism; AMP biosynthesis via salvage pathway; AMP from ADP: step 1/1. In terms of biological role, catalyzes the reversible transfer of the terminal phosphate group between ATP and AMP. Plays an important role in cellular energy homeostasis and in adenine nucleotide metabolism. This is Adenylate kinase from Lysinibacillus sphaericus (strain C3-41).